A 529-amino-acid chain; its full sequence is Peptide chain release factor 3 (529 aa).

The tr-type G domain occupies 11-280 (AKRRTFAIIS…GLVEWAPAPM (270 aa)). Residues 20-27 (SHPDAGKT), 88-92 (DTPGH), and 142-145 (NKLD) each bind GTP.

The protein belongs to the TRAFAC class translation factor GTPase superfamily. Classic translation factor GTPase family. PrfC subfamily.

It localises to the cytoplasm. Functionally, increases the formation of ribosomal termination complexes and stimulates activities of RF-1 and RF-2. It binds guanine nucleotides and has strong preference for UGA stop codons. It may interact directly with the ribosome. The stimulation of RF-1 and RF-2 is significantly reduced by GTP and GDP, but not by GMP. This chain is Peptide chain release factor 3, found in Shigella flexneri.